Here is an 878-residue protein sequence, read N- to C-terminus: Alanine--tRNA ligase (878 aa).

Zn(2+) is bound by residues His-567, His-571, Cys-669, and His-673. The interval 841–860 is disordered; that stretch reads AVGGKGGGRPDMAEAGGKDP.

It belongs to the class-II aminoacyl-tRNA synthetase family. Requires Zn(2+) as cofactor.

Its subcellular location is the cytoplasm. The enzyme catalyses tRNA(Ala) + L-alanine + ATP = L-alanyl-tRNA(Ala) + AMP + diphosphate. In terms of biological role, catalyzes the attachment of alanine to tRNA(Ala) in a two-step reaction: alanine is first activated by ATP to form Ala-AMP and then transferred to the acceptor end of tRNA(Ala). Also edits incorrectly charged Ser-tRNA(Ala) and Gly-tRNA(Ala) via its editing domain. The chain is Alanine--tRNA ligase from Solibacter usitatus (strain Ellin6076).